A 215-amino-acid chain; its full sequence is Pyridoxine/pyridoxamine 5'-phosphate oxidase (215 aa).

Substrate is bound by residues 9-12 and Lys69; that span reads RRDY. FMN contacts are provided by residues 64-69, 79-80, Lys86, and Gln108; these read RILLLK and FT. Residues Tyr126, Arg130, and Ser134 each contribute to the substrate site. FMN is bound by residues 143–144 and Trp188; that span reads QS. A substrate-binding site is contributed by 194–196; sequence RLH. Arg198 is a binding site for FMN.

Belongs to the pyridoxamine 5'-phosphate oxidase family. In terms of assembly, homodimer. The cofactor is FMN.

It carries out the reaction pyridoxamine 5'-phosphate + O2 + H2O = pyridoxal 5'-phosphate + H2O2 + NH4(+). It catalyses the reaction pyridoxine 5'-phosphate + O2 = pyridoxal 5'-phosphate + H2O2. It functions in the pathway cofactor metabolism; pyridoxal 5'-phosphate salvage; pyridoxal 5'-phosphate from pyridoxamine 5'-phosphate: step 1/1. The protein operates within cofactor metabolism; pyridoxal 5'-phosphate salvage; pyridoxal 5'-phosphate from pyridoxine 5'-phosphate: step 1/1. Catalyzes the oxidation of either pyridoxine 5'-phosphate (PNP) or pyridoxamine 5'-phosphate (PMP) into pyridoxal 5'-phosphate (PLP). The protein is Pyridoxine/pyridoxamine 5'-phosphate oxidase of Pseudomonas fluorescens (strain SBW25).